A 190-amino-acid polypeptide reads, in one-letter code: Protein GrpE (190 aa).

The segment at 1–42 (MNEKDNQTTSEPENEQEIIDVNDSGEQPEENETEQPQEEAVE) is disordered. A compositionally biased stretch (acidic residues) spans 26-42 (EQPEENETEQPQEEAVE).

This sequence belongs to the GrpE family. As to quaternary structure, homodimer.

It localises to the cytoplasm. Participates actively in the response to hyperosmotic and heat shock by preventing the aggregation of stress-denatured proteins, in association with DnaK and GrpE. It is the nucleotide exchange factor for DnaK and may function as a thermosensor. Unfolded proteins bind initially to DnaJ; upon interaction with the DnaJ-bound protein, DnaK hydrolyzes its bound ATP, resulting in the formation of a stable complex. GrpE releases ADP from DnaK; ATP binding to DnaK triggers the release of the substrate protein, thus completing the reaction cycle. Several rounds of ATP-dependent interactions between DnaJ, DnaK and GrpE are required for fully efficient folding. The protein is Protein GrpE of Oceanobacillus iheyensis (strain DSM 14371 / CIP 107618 / JCM 11309 / KCTC 3954 / HTE831).